The sequence spans 105 residues: Small ribosomal subunit protein uS17 (105 aa).

The protein belongs to the universal ribosomal protein uS17 family. As to quaternary structure, part of the 30S ribosomal subunit. Contacts protein S12.

One of the primary rRNA binding proteins, it binds directly to 16S rRNA where it helps nucleate assembly of the platform and body of the 30S subunit by bringing together and stabilizing interactions between several different RNA helices. The combined cluster of proteins S8, S12 and S17 appears to hold together the shoulder and platform of the 30S subunit. This is Small ribosomal subunit protein uS17 from Thermus thermophilus (strain ATCC 27634 / DSM 579 / HB8).